A 547-amino-acid polypeptide reads, in one-letter code: Chaperonin GroEL (547 aa).

ATP contacts are provided by residues 30-33, Lys-51, 87-91, Gly-415, 479-481, and Asp-495; these read TLGP, DGTTT, and NAA. The interval 524-547 is disordered; that stretch reads APKKDEPTPPAAGGGMGGMGGMDF. The span at 535–547 shows a compositional bias: gly residues; it reads AGGGMGGMGGMDF.

Belongs to the chaperonin (HSP60) family. In terms of assembly, forms a cylinder of 14 subunits composed of two heptameric rings stacked back-to-back. Interacts with the co-chaperonin GroES.

It is found in the cytoplasm. The catalysed reaction is ATP + H2O + a folded polypeptide = ADP + phosphate + an unfolded polypeptide.. In terms of biological role, together with its co-chaperonin GroES, plays an essential role in assisting protein folding. The GroEL-GroES system forms a nano-cage that allows encapsulation of the non-native substrate proteins and provides a physical environment optimized to promote and accelerate protein folding. This is Chaperonin GroEL from Xylella fastidiosa (strain 9a5c).